We begin with the raw amino-acid sequence, 323 residues long: Aldo-keto reductase family 1 member C1 (323 aa).

NADP(+)-binding positions include 20–24 (GFGTY) and Asp-50. Tyr-24 provides a ligand contact to substrate. The active-site Proton donor is Tyr-55. Position 117 (His-117) interacts with substrate. Residues 166-167 (SN), Gln-190, and 216-222 (YSALGSH) contribute to the NADP(+) site. Residues His-222 and Trp-227 each contribute to the substrate site. 270 to 280 (KSYNEQRIREN) is a binding site for NADP(+).

This sequence belongs to the aldo/keto reductase family. As to quaternary structure, monomer. In terms of tissue distribution, expressed in liver, adrenal gland, intestine and kidney.

It is found in the cytoplasm. The protein localises to the cytosol. It carries out the reaction a 3alpha-hydroxysteroid + NADP(+) = a 3-oxosteroid + NADPH + H(+). It catalyses the reaction a 3alpha-hydroxysteroid + NAD(+) = a 3-oxosteroid + NADH + H(+). The enzyme catalyses (17R,20S)-17,20-dihydroxypregn-4-en-3-one + NADP(+) = 17alpha-hydroxyprogesterone + NADPH + H(+). The catalysed reaction is (17R,20S)-17,20-dihydroxypregn-4-en-3-one + NAD(+) = 17alpha-hydroxyprogesterone + NADH + H(+). It carries out the reaction (20S)-hydroxypregn-4-en-3-one + NADP(+) = progesterone + NADPH + H(+). It catalyses the reaction (20S)-hydroxypregn-4-en-3-one + NAD(+) = progesterone + NADH + H(+). The enzyme catalyses (1R,2R)-1,2-dihydrobenzene-1,2-diol + NADP(+) = catechol + NADPH + H(+). The catalysed reaction is (S)-indan-1-ol + NAD(+) = indan-1-one + NADH + H(+). It carries out the reaction (S)-indan-1-ol + NADP(+) = indan-1-one + NADPH + H(+). It catalyses the reaction 5alpha-androstane-3alpha,17beta-diol + NADP(+) = 17beta-hydroxy-5alpha-androstan-3-one + NADPH + H(+). The enzyme catalyses 5alpha-androstane-3beta,17beta-diol + NADP(+) = 17beta-hydroxy-5alpha-androstan-3-one + NADPH + H(+). The catalysed reaction is 5alpha-androstane-3alpha,17beta-diol + NAD(+) = 17beta-hydroxy-5alpha-androstan-3-one + NADH + H(+). It carries out the reaction 17beta-hydroxy-5alpha-androstan-3-one + NADP(+) = 5alpha-androstan-3,17-dione + NADPH + H(+). It catalyses the reaction androsterone + NADP(+) = 5alpha-androstan-3,17-dione + NADPH + H(+). The enzyme catalyses androsterone + NADPH + H(+) = 5alpha-androstane-3alpha,17beta-diol + NADP(+). The catalysed reaction is 5alpha-androstane-3alpha,17beta-diol + NAD(+) = androsterone + NADH + H(+). It carries out the reaction 17beta-estradiol + NADP(+) = estrone + NADPH + H(+). It catalyses the reaction 17beta-estradiol + NAD(+) = estrone + NADH + H(+). The enzyme catalyses testosterone + NADP(+) = androst-4-ene-3,17-dione + NADPH + H(+). The catalysed reaction is 20alpha-hydroxy-5beta-pregnan-3-one + NADP(+) = 5beta-pregnan-3,20-dione + NADPH + H(+). It carries out the reaction 3beta-hydroxy-5beta-pregnane-20-one + NADP(+) = 5beta-pregnan-3,20-dione + NADPH + H(+). It catalyses the reaction 3beta-hydroxy-5beta-pregnane-20-one + NADPH + H(+) = 3beta,20alpha-dihydroxy-5beta-pregnane + NADP(+). The enzyme catalyses (3beta,5alpha,17beta)-3-hydroxyandrostan-17-yl sulfate + NADP(+) = 5alpha-dihydrotestosterone sulfate + NADPH + H(+). It functions in the pathway steroid metabolism. Cytosolic aldo-keto reductase that catalyzes the NADH and NADPH-dependent reduction of ketosteroids to hydroxysteroids. Most probably acts as a reductase in vivo since the oxidase activity measured in vitro is inhibited by physiological concentrations of NADPH. Displays a broad positional specificity acting on positions 3, 17 and 20 of steroids and regulates the metabolism of hormones like estrogens and androgens. May also reduce conjugated steroids such as 5alpha-dihydrotestosterone sulfate. Displays affinity for bile acids. This chain is Aldo-keto reductase family 1 member C1 (AKR1C1), found in Macaca fuscata fuscata (Japanese macaque).